Here is a 225-residue protein sequence, read N- to C-terminus: MSDIFPESHPEHPLNLIPELCRKFYDLGWATGTGGGISIKMGENYYIAPSGVQKERIMPNEIFVLNASQDVVEEPRTEKQLKISECTPLFFNAYRLRGAGACLHTHSANCVLISLLCDREFRISHIEMIKGIINNETKKALGFRDTLVVPIIENTDFEKDLTASMAECMVRYPESCAVLVRRHGMYVWSDTWQKAKGAVECIDYLMGLAIRMRTLGLEWEPKGAK.

Cys-86 serves as a coordination point for substrate. Zn(2+)-binding residues include His-104 and His-106. Glu-127 (proton donor/acceptor) is an active-site residue. His-183 contacts Zn(2+).

It belongs to the aldolase class II family. MtnB subfamily. Requires Zn(2+) as cofactor.

The protein resides in the cytoplasm. The catalysed reaction is 5-(methylsulfanyl)-D-ribulose 1-phosphate = 5-methylsulfanyl-2,3-dioxopentyl phosphate + H2O. It participates in amino-acid biosynthesis; L-methionine biosynthesis via salvage pathway; L-methionine from S-methyl-5-thio-alpha-D-ribose 1-phosphate: step 2/6. Functionally, catalyzes the dehydration of methylthioribulose-1-phosphate (MTRu-1-P) into 2,3-diketo-5-methylthiopentyl-1-phosphate (DK-MTP-1-P). This Leishmania infantum protein is Probable methylthioribulose-1-phosphate dehydratase.